Here is a 222-residue protein sequence, read N- to C-terminus: Glutathione S-transferase A5 (222 aa).

N-acetylalanine is present on Ala2. In terms of domain architecture, GST N-terminal spans 3–83 (EKPKLHYSNA…YIASKYNLYG (81 aa)). Lys4 bears the N6-succinyllysine mark. Glutathione is bound by residues Tyr9, Arg45, 54-55 (QV), and 67-68 (QT). Positions 85–208 (DMKERALIDM…QPGSQRKPPM (124 aa)) constitute a GST C-terminal domain.

The protein belongs to the GST superfamily. Alpha family. In terms of assembly, homodimer. In terms of tissue distribution, expression not detected.

The protein resides in the cytoplasm. It catalyses the reaction RX + glutathione = an S-substituted glutathione + a halide anion + H(+). In Homo sapiens (Human), this protein is Glutathione S-transferase A5 (GSTA5).